We begin with the raw amino-acid sequence, 490 residues long: ATP synthase subunit beta, chloroplastic (490 aa).

An ATP-binding site is contributed by 170-177 (GGAGVGKT).

The protein belongs to the ATPase alpha/beta chains family. In terms of assembly, F-type ATPases have 2 components, CF(1) - the catalytic core - and CF(0) - the membrane proton channel. CF(1) has five subunits: alpha(3), beta(3), gamma(1), delta(1), epsilon(1). CF(0) has four main subunits: a(1), b(1), b'(1) and c(9-12).

It localises to the plastid. The protein resides in the chloroplast thylakoid membrane. The catalysed reaction is ATP + H2O + 4 H(+)(in) = ADP + phosphate + 5 H(+)(out). Produces ATP from ADP in the presence of a proton gradient across the membrane. The catalytic sites are hosted primarily by the beta subunits. This Ipomoea obscura (Obscure morning glory) protein is ATP synthase subunit beta, chloroplastic.